The following is a 262-amino-acid chain: NAD-dependent glucose-6-phosphate dehydrogenase (262 aa).

NAD(+) is bound by residues Asn-90, Ser-115, Tyr-152, and Lys-156. The active-site Proton acceptor is the Tyr-152.

This sequence belongs to the NAD(P)-dependent epimerase/dehydratase family. As to quaternary structure, homodimer.

The enzyme catalyses D-glucose 6-phosphate + NAD(+) = 6-phospho-D-glucono-1,5-lactone + NADH + H(+). It functions in the pathway carbohydrate degradation; pentose phosphate pathway. In terms of biological role, catalyzes the NAD-dependent oxidation of glucose 6-phosphate to 6-phosphogluconolactone. The polypeptide is NAD-dependent glucose-6-phosphate dehydrogenase (Haloferax volcanii (strain ATCC 29605 / DSM 3757 / JCM 8879 / NBRC 14742 / NCIMB 2012 / VKM B-1768 / DS2) (Halobacterium volcanii)).